The primary structure comprises 300 residues: Bifunctional protein FolD (300 aa).

NADP(+) is bound by residues 169-171 and Ile235; that span reads GHS.

The protein belongs to the tetrahydrofolate dehydrogenase/cyclohydrolase family. As to quaternary structure, homodimer.

The catalysed reaction is (6R)-5,10-methylene-5,6,7,8-tetrahydrofolate + NADP(+) = (6R)-5,10-methenyltetrahydrofolate + NADPH. It catalyses the reaction (6R)-5,10-methenyltetrahydrofolate + H2O = (6R)-10-formyltetrahydrofolate + H(+). The protein operates within one-carbon metabolism; tetrahydrofolate interconversion. In terms of biological role, catalyzes the oxidation of 5,10-methylenetetrahydrofolate to 5,10-methenyltetrahydrofolate and then the hydrolysis of 5,10-methenyltetrahydrofolate to 10-formyltetrahydrofolate. The chain is Bifunctional protein FolD from Rhodobacter capsulatus (strain ATCC BAA-309 / NBRC 16581 / SB1003).